The following is a 650-amino-acid chain: Kinesin-like protein KIF22-B (650 aa).

Residues 31 to 359 (RVRVAVRLRP…LNFAAKSKQI (329 aa)) form the Kinesin motor domain. An ATP-binding site is contributed by 116–123 (GPTGAGKT). The interval 365–416 (SRETTQTVAQPAMKRPREEAEATTSSRQRKKSKTDSTESSPNSSMESTGKRK) is disordered. Low complexity predominate over residues 401–411 (TESSPNSSMES). Residues 452-498 (KRERMALLKKWEESQMEIERLKEKQKELEQKAMEAEARLEKSNNSDL) adopt a coiled-coil conformation. Residues 560–563 (GHEN) carry the Important for regulated proteolytic degradation motif.

This sequence belongs to the TRAFAC class myosin-kinesin ATPase superfamily. Kinesin family. In terms of processing, ubiquitinated, leading to its subsequent proteasomal degradation.

The protein localises to the nucleus. It is found in the cytoplasm. The protein resides in the cytoskeleton. Functionally, kinesin family member that is involved in spindle formation and the movements of chromosomes during mitosis and meiosis. Binds to microtubules and to DNA. The polypeptide is Kinesin-like protein KIF22-B (kif22-b) (Xenopus laevis (African clawed frog)).